The sequence spans 592 residues: Frizzled-9 (592 aa).

Positions 1–23 are cleaved as a signal peptide; that stretch reads MAVPPLLRGALLLWQLLATGGAA. Over 24–230 the chain is Extracellular; that stretch reads LEIGRFDPER…EVFWSRRDKD (207 aa). Positions 35 to 156 constitute an FZ domain; the sequence is RGPAPCQAME…NDPHALCMEA (122 aa). 5 disulfides stabilise this stretch: cysteine 40/cysteine 101, cysteine 48/cysteine 94, cysteine 85/cysteine 123, cysteine 112/cysteine 153, and cysteine 116/cysteine 140. The interval 59–173 is required for Wnt-activated receptor activity; that stretch reads PNLLGHTSQG…PTEPHKGLGM (115 aa). Residues 231–251 form a helical membrane-spanning segment; that stretch reads FALVWMAVWSALCFFSTAFTV. Over 252-267 the chain is Cytoplasmic; sequence FTFLLEPHRFQYPERP. Residues 268 to 288 form a helical membrane-spanning segment; that stretch reads IIFLSMCYNVYSLAFLIRAVA. At 289 to 314 the chain is on the extracellular side; that stretch reads GAQSVACDQEAGALYVIQEGLENTGC. The chain crosses the membrane as a helical span at residues 315–335; that stretch reads TLVFLLLYYFGMASSLWWVVL. The Cytoplasmic segment spans residues 336–356; the sequence is TLTWFLAAGKKWGHEAIEAHG. Residues 357–377 traverse the membrane as a helical segment; the sequence is SYFHMAAWGLPALKTIVVLTL. Over 378-401 the chain is Extracellular; that stretch reads RKVAGDELTGLCYVASMDPAALTG. Residues 402 to 422 traverse the membrane as a helical segment; the sequence is FVLVPLSCYLVLGTSFLLTGF. At 423 to 448 the chain is on the cytoplasmic side; the sequence is VALFHIRKIMKTGGTNTEKLEKLMVK. The chain crosses the membrane as a helical span at residues 449-469; sequence IGVFSILYTVPATCVIVCYVY. Residues 470 to 509 lie on the Extracellular side of the membrane; that stretch reads ERLNMDFWRLRATEQPCTAAAVPGGRRDCSLPGGSVPTVA. Residues 510 to 530 traverse the membrane as a helical segment; the sequence is VFMLKIFMSLVVGITSGVWVW. The Cytoplasmic segment spans residues 531–592; it reads SSKTFQTWQS…DPSLENPTHL (62 aa). The Lys-Thr-X-X-X-Trp motif, mediates interaction with the PDZ domain of Dvl family members signature appears at 533–538; the sequence is KTFQTW. A required for CTNNB1 accumulation and TCF transcription factor activity region spans residues 555–592; sequence ACRTPGGYGRGTHCHYKAPTVVLHMTKTDPSLENPTHL.

This sequence belongs to the G-protein coupled receptor Fz/Smo family. In terms of processing, ubiquitinated by ZNRF3, leading to its degradation by the proteasome.

The protein resides in the cell membrane. Its function is as follows. Receptor for WNT2 that is coupled to the beta-catenin canonical signaling pathway, which leads to the activation of disheveled proteins, inhibition of GSK-3 kinase, nuclear accumulation of beta-catenin and activation of Wnt target genes. Plays a role in neuromuscular junction (NMJ) assembly by negatively regulating the clustering of acetylcholine receptors (AChR) through the beta-catenin canonical signaling pathway. May play a role in neural progenitor cells (NPCs) viability through the beta-catenin canonical signaling pathway by negatively regulating cell cycle arrest leading to inhibition of neuron apoptotic process. During hippocampal development, regulates neuroblast proliferation and apoptotic cell death. Controls bone formation through non canonical Wnt signaling mediated via ISG15. Positively regulates bone regeneration through non canonical Wnt signaling. In Rattus norvegicus (Rat), this protein is Frizzled-9.